A 508-amino-acid chain; its full sequence is H/ACA ribonucleoprotein complex subunit 4 (508 aa).

The tract at residues 1-29 (MADVEVRKEKKKKKIKEEPLDGDDIGTLQ) is disordered. Residue Asp-123 is the Nucleophile of the active site. The 76-residue stretch at 294 to 369 (HKRIIMKDSS…VVAKIKRVIM (76 aa)) folds into the PUA domain. Positions 423–508 (AAQEVSPTNG…KDRDRDEAQE (86 aa)) are disordered. The residue at position 442 (Ser-442) is a Phosphoserine. A compositionally biased stretch (low complexity) spans 442 to 457 (STSSVEETAAAAVSEE). At Thr-443 the chain carries Phosphothreonine. Phosphoserine occurs at positions 444 and 445. Thr-449 carries the phosphothreonine modification. Ser-455 carries the post-translational modification Phosphoserine. Position 458 is a phosphothreonine (Thr-458). Acidic residues predominate over residues 475–485 (EAPEAAEEEAE). Positions 499 to 508 (KDRDRDEAQE) are enriched in basic and acidic residues.

This sequence belongs to the pseudouridine synthase TruB family. Component of the box H/ACA small nucleolar ribonucleoprotein (H/ACA snoRNP) complex consisting of Nop60B, Gar1, NPH2 and Nop10, and associated with H/ACA-type snoRNAs. In terms of tissue distribution, expressed at higher levels in females than in males. As to expression, expressed almost exclusively in females with high levels of expression in the ovary.

The protein resides in the nucleus. The protein localises to the nucleolus. The catalysed reaction is a uridine in RNA = a pseudouridine in RNA. Its function is as follows. Catalytic subunit of the box H/ACA small nucleolar ribonucleoprotein (H/ACA snoRNP) complex, which catalyzes pseudouridylation of rRNA. This involves the isomerization of uridine such that the ribose is subsequently attached to C5, instead of the normal N1. Pseudouridine ('psi') residues may serve to stabilize the conformation of rRNAs. Required for ribosome biogenesis; plays a central role in ribosomal RNA processing. H/ACA snoRNP complex-dependent ribosome biogenesis is important in female germline cell differentiation during oogenesis. Essential for viability and female fertility. Required for maintenance of the germline stem cell lineage during spermatogenesis. The sequence is that of H/ACA ribonucleoprotein complex subunit 4 from Drosophila melanogaster (Fruit fly).